The primary structure comprises 251 residues: Large ribosomal subunit protein uL2 (251 aa).

Residues 1–12 (MGKRLRVQRHGR) show a composition bias toward basic residues. The interval 1–22 (MGKRLRVQRHGRGTPQWRNRGH) is disordered.

It belongs to the universal ribosomal protein uL2 family. As to quaternary structure, part of the 50S ribosomal subunit. Forms a bridge to the 30S subunit in the 70S ribosome.

Its function is as follows. One of the primary rRNA binding proteins. Required for association of the 30S and 50S subunits to form the 70S ribosome, for tRNA binding and peptide bond formation. It has been suggested to have peptidyltransferase activity; this is somewhat controversial. Makes several contacts with the 16S rRNA in the 70S ribosome. This is Large ribosomal subunit protein uL2 from Ignicoccus hospitalis (strain KIN4/I / DSM 18386 / JCM 14125).